The sequence spans 177 residues: Large ribosomal subunit protein uL6 (177 aa).

Belongs to the universal ribosomal protein uL6 family. As to quaternary structure, part of the 50S ribosomal subunit.

In terms of biological role, this protein binds to the 23S rRNA, and is important in its secondary structure. It is located near the subunit interface in the base of the L7/L12 stalk, and near the tRNA binding site of the peptidyltransferase center. In Methylocella silvestris (strain DSM 15510 / CIP 108128 / LMG 27833 / NCIMB 13906 / BL2), this protein is Large ribosomal subunit protein uL6.